A 250-amino-acid polypeptide reads, in one-letter code: PTB-containing, cubilin and LRP1-interacting protein (250 aa).

The 158-residue stretch at 93-250 (VTYLGKVSTT…VSQELESDDG (158 aa)) folds into the PID domain. The segment at 229–250 (DGRIHSNSSSEEVSQELESDDG) is disordered. Phosphoserine occurs at positions 236 and 247. Residues 241-250 (VSQELESDDG) are compositionally biased toward acidic residues.

In terms of assembly, found in a complex with PID1/PCLI1, LRP1 and CUBNI. Interacts with LRP1 and CUBN. Expressed in subcutaneous fat, heart, skeletal muscle, brain, colon, thymus, spleen, kidney, liver, small intestine, placenta, lung and peripheral blood leukocyte.

Its subcellular location is the cytoplasm. In terms of biological role, increases proliferation of preadipocytes without affecting adipocytic differentiation. The polypeptide is PTB-containing, cubilin and LRP1-interacting protein (PID1) (Homo sapiens (Human)).